We begin with the raw amino-acid sequence, 554 residues long: Potassium-transporting ATPase potassium-binding subunit (554 aa).

A run of 12 helical transmembrane segments spans residues proline 3–valine 23, proline 60–leucine 80, glycine 131–valine 151, valine 174–isoleucine 194, leucine 252–methionine 272, glycine 279–tryptophan 299, phenylalanine 323–valine 343, glycine 352–valine 372, glycine 375–glycine 395, phenylalanine 412–methionine 432, leucine 481–glycine 501, and leucine 522–alanine 542.

The protein belongs to the KdpA family. As to quaternary structure, the system is composed of three essential subunits: KdpA, KdpB and KdpC.

The protein localises to the cell membrane. Functionally, part of the high-affinity ATP-driven potassium transport (or Kdp) system, which catalyzes the hydrolysis of ATP coupled with the electrogenic transport of potassium into the cytoplasm. This subunit binds the extracellular potassium ions and delivers the ions to the membrane domain of KdpB through an intramembrane tunnel. The chain is Potassium-transporting ATPase potassium-binding subunit from Streptomyces coelicolor (strain ATCC BAA-471 / A3(2) / M145).